The following is a 1211-amino-acid chain: Diacylglycerol kinase eta (1211 aa).

The tract at residues 1-66 (MAGAGSQHHP…QMRTKTSIKE (66 aa)) is disordered. Residues 19–32 (AGASAVSPTAAGPG) show a composition bias toward low complexity. A compositionally biased stretch (polar residues) spans 52–61 (VSTSGQMRTK). The region spanning 62-155 (TSIKEGQLLK…WISSLKSVQS (94 aa)) is the PH domain. 2 consecutive Phorbol-ester/DAG-type zinc fingers follow at residues 172–222 (MHNW…TNNC) and 244–295 (PHQW…HPVC). The DAGKc domain occupies 325-460 (FCVSPLLVFV…LDRWSIMTYE (136 aa)). Disordered regions lie at residues 562-613 (SQAS…KPRE) and 634-694 (KVMD…SVAG). 2 stretches are compositionally biased toward acidic residues: residues 576–589 (PEED…DESL) and 653–662 (YDTETDEAKE). A compositionally biased stretch (polar residues) spans 670–691 (SAKTTSQSPDAQASCGHPQTDS). One can recognise an SAM domain in the interval 1143-1206 (WGTEEVAAWL…LQGIKELERN (64 aa)).

This sequence belongs to the eukaryotic diacylglycerol kinase family. In terms of assembly, interacts with RAF1 and BRAF. As to quaternary structure, homooligomers. Heterooligomers. Oligomerization through the SAM domain inhibits the diacylglycerol kinase activity. Heterooligomerizes with SAM domain-containing isoforms of DGKD. Does not form homooligomers. In terms of processing, phosphorylated. Phosphorylation does not inhibit catalytic activity. In terms of tissue distribution, widely expressed. Detected in the granulosa cells of the primary and secondary follicles. Expressed in mature follicles and corpus lutea. Expressed in the oviductal epithelium. In the uterus, strongly expressed in the luminal epithelium. Detected in the uterine glands. Detected in ovary and uterus (at protein level). As to expression, specifically expressed in testis. Detected in the inner area of the testis. Strongly expressed in the secondary spermatocytes and the round spermatids and weakly detected in the primary spermatocytes.

The protein resides in the cytoplasm. It localises to the cell membrane. It is found in the cytoskeleton. The enzyme catalyses a 1,2-diacyl-sn-glycerol + ATP = a 1,2-diacyl-sn-glycero-3-phosphate + ADP + H(+). The catalysed reaction is 1,2-di-(9Z-octadecenoyl)-sn-glycerol + ATP = 1,2-di-(9Z-octadecenoyl)-sn-glycero-3-phosphate + ADP + H(+). It functions in the pathway lipid metabolism; glycerolipid metabolism. Diacylglycerol kinase that converts diacylglycerol/DAG into phosphatidic acid/phosphatidate/PA and regulates the respective levels of these two bioactive lipids. Thereby, acts as a central switch between the signaling pathways activated by these second messengers with different cellular targets and opposite effects in numerous biological processes. Plays a key role in promoting cell growth. Activates the Ras/B-Raf/C-Raf/MEK/ERK signaling pathway induced by EGF. Regulates the recruitment of RAF1 and BRAF from cytoplasm to membranes and their heterodimerization. This Mus musculus (Mouse) protein is Diacylglycerol kinase eta.